The following is a 371-amino-acid chain: MGPRVLPLLEPGCRPQAGKWYRMAPRGEWPRGRVGHGCLFVPGGSGRVLLLGGADPAGAFADAHFVELGAHLWAPAAWSGLRPRYEHATFLSACRPPRLWVFGGAHRAGNRSCVQVLDPEIGTWESPEVTGIPPLPRTFHTSSAAIGDCLYVFGGGDKGAEPVKDQQLHVFDTVALAWTQPDTHGDPPSPRHGHVVVAVGTKLFIHGGLAGDIFYNDLFCIDTTDMKWVKIAATGDVPGGRASHSSAVFKDHLYIFGGIGPDGTLDTTYKYHIEEQQWTLLQFDSPLPAGRLDHAMCVIPWRVGKNGDAAAVSKEDKAEPTASAGDRAGHLCRGQDKKACTEDTMMHLLLIFGGMDTQAEIYRDCIVSLIE.

Kelch repeat units follow at residues 47-93, 98-144, 149-201, 202-251, 252-301, and 348-371; these read RVLL…FLSA, RLWV…TSSA, CLYV…AVGT, KLFI…VFKD, HLYI…VIPW, and LLLI…SLIE.

In terms of biological role, rab9 effector required for endosome to trans-Golgi network (TGN) transport. This chain is Rab9 effector protein with kelch motifs (RABEPK), found in Gallus gallus (Chicken).